We begin with the raw amino-acid sequence, 47 residues long: MNIGFDMILAKLPEAYAMFDPLVDVLPVIPLLFLLLAFVWQASVSFR.

The propeptide occupies 1–10 (MNIGFDMILA). Residues 22-42 (LVDVLPVIPLLFLLLAFVWQA) traverse the membrane as a helical segment.

Belongs to the PsbK family. PSII is composed of 1 copy each of membrane proteins PsbA, PsbB, PsbC, PsbD, PsbE, PsbF, PsbH, PsbI, PsbJ, PsbK, PsbL, PsbM, PsbT, PsbX, PsbY, PsbZ, Psb30/Ycf12, at least 3 peripheral proteins of the oxygen-evolving complex and a large number of cofactors. It forms dimeric complexes.

The protein localises to the plastid. The protein resides in the chloroplast thylakoid membrane. Its function is as follows. One of the components of the core complex of photosystem II (PSII). PSII is a light-driven water:plastoquinone oxidoreductase that uses light energy to abstract electrons from H(2)O, generating O(2) and a proton gradient subsequently used for ATP formation. It consists of a core antenna complex that captures photons, and an electron transfer chain that converts photonic excitation into a charge separation. In Mesostigma viride (Green alga), this protein is Photosystem II reaction center protein K.